The primary structure comprises 380 residues: MTADSAVLALVRELIARPSVTPDDVDCQLLLAQRLEHAGFRCETIARGDVTNLWARRGNAGPLVVFAGHTDVVPPGPRDKWDSDPFVPTERDGYLYGRGAADMKSSIAAFVVAAEEFTAAHPGHDGSIALLLTSDEEGPAVDGTVIVCDELRARGEQPDYCIVGEPTSGDVLGDTCKNGRRGSLSGRLTVKGIQGHVAYPHLARNPVHQLAPALAEMAATEWDRGNEYFPPTTFQVSNLRAGTGATNVVPGEAVVLFNFRFSTASTPEGLKQRVHALLDKHGLEYELDWELGGEPFLTPRGPLTDALVAAIRAETGVAAELSTTGGTSDGRFIAKICPQVIEFGPCNATIHKVNERIELASLEPLKNIYRRTLENLLLPR.

Zn(2+) is bound at residue histidine 69. Aspartate 71 is a catalytic residue. Aspartate 102 contacts Zn(2+). Residue glutamate 136 is the Proton acceptor of the active site. Glutamate 137, glutamate 165, and histidine 351 together coordinate Zn(2+).

Belongs to the peptidase M20A family. DapE subfamily. In terms of assembly, homodimer. The cofactor is Zn(2+). Co(2+) is required as a cofactor.

It carries out the reaction N-succinyl-(2S,6S)-2,6-diaminopimelate + H2O = (2S,6S)-2,6-diaminopimelate + succinate. It functions in the pathway amino-acid biosynthesis; L-lysine biosynthesis via DAP pathway; LL-2,6-diaminopimelate from (S)-tetrahydrodipicolinate (succinylase route): step 3/3. Functionally, catalyzes the hydrolysis of N-succinyl-L,L-diaminopimelic acid (SDAP), forming succinate and LL-2,6-diaminopimelate (DAP), an intermediate involved in the bacterial biosynthesis of lysine and meso-diaminopimelic acid, an essential component of bacterial cell walls. This is Succinyl-diaminopimelate desuccinylase from Bordetella petrii (strain ATCC BAA-461 / DSM 12804 / CCUG 43448).